Reading from the N-terminus, the 470-residue chain is Cysteine--tRNA ligase (470 aa).

Cys-30 is a Zn(2+) binding site. Positions 32–42 (PTVYNYIHIGN) match the 'HIGH' region motif. Residues Cys-211, His-236, and Glu-240 each coordinate Zn(2+). A 'KMSKS' region motif is present at residues 268–272 (KMSKS). An ATP-binding site is contributed by Lys-271.

The protein belongs to the class-I aminoacyl-tRNA synthetase family. As to quaternary structure, monomer. It depends on Zn(2+) as a cofactor.

Its subcellular location is the cytoplasm. The catalysed reaction is tRNA(Cys) + L-cysteine + ATP = L-cysteinyl-tRNA(Cys) + AMP + diphosphate. This is Cysteine--tRNA ligase from Fervidobacterium nodosum (strain ATCC 35602 / DSM 5306 / Rt17-B1).